We begin with the raw amino-acid sequence, 254 residues long: Dihydroorotate dehydrogenase B (NAD(+)), electron transfer subunit (254 aa).

The 99-residue stretch at M1 to I99 folds into the FAD-binding FR-type domain. Residues R50 to S53, L67 to R69, and G74 to T75 each bind FAD. 4 residues coordinate [2Fe-2S] cluster: C218, C223, C226, and C241.

The protein belongs to the PyrK family. In terms of assembly, heterotetramer of 2 PyrK and 2 PyrD type B subunits. [2Fe-2S] cluster is required as a cofactor. Requires FAD as cofactor.

The protein operates within pyrimidine metabolism; UMP biosynthesis via de novo pathway; orotate from (S)-dihydroorotate (NAD(+) route): step 1/1. In terms of biological role, responsible for channeling the electrons from the oxidation of dihydroorotate from the FMN redox center in the PyrD type B subunit to the ultimate electron acceptor NAD(+). In Listeria monocytogenes serovar 1/2a (strain ATCC BAA-679 / EGD-e), this protein is Dihydroorotate dehydrogenase B (NAD(+)), electron transfer subunit.